An 824-amino-acid chain; its full sequence is Leucine--tRNA ligase (824 aa).

Residues 42–52 (PYPSGKIHMGH) carry the 'HIGH' region motif. The 'KMSKS' region motif lies at 581 to 585 (KMSKS). Lysine 584 contributes to the ATP binding site.

The protein belongs to the class-I aminoacyl-tRNA synthetase family.

Its subcellular location is the cytoplasm. The catalysed reaction is tRNA(Leu) + L-leucine + ATP = L-leucyl-tRNA(Leu) + AMP + diphosphate. In Geobacter sp. (strain M21), this protein is Leucine--tRNA ligase.